A 530-amino-acid polypeptide reads, in one-letter code: BTB/POZ domain-containing protein 3 (530 aa).

The tract at residues 23-48 (KNRSKKGSKKANSSGGGGGGGSVGSG) is disordered. A compositionally biased stretch (gly residues) spans 36–46 (SGGGGGGGSVG). Residues 128–198 (ADVHFVVGPP…IYCDEIDLAA (71 aa)) form the BTB domain. Residues 243–308 (FEEPDLTQRC…NWAEVECQRQ (66 aa)) enclose the BACK domain.

In the somatosensory cortex, specifically expressed in spiny stellate neurons during barrel formation. Also expressed in the olfactory bulb, piriform cortex and hippocampus.

It is found in the cytoplasm. The protein resides in the cytosol. The protein localises to the nucleus. Acts as a key regulator of dendritic field orientation during development of sensory cortex. Also directs dendrites toward active axon terminals when ectopically expressed. The chain is BTB/POZ domain-containing protein 3 (Btbd3) from Mus musculus (Mouse).